A 1005-amino-acid chain; its full sequence is Protein TIC 214 (1005 aa).

The next 6 membrane-spanning stretches (helical) occupy residues 25-45 (VGLY…LFLL), 67-87 (FFTG…HLAL), 91-111 (HTIL…SNSG), 131-151 (SFQL…SVLG), 177-197 (FVGW…VFVW), and 304-324 (LFSI…PLLY). Disordered regions lie at residues 457 to 481 (VEEG…EREE) and 767 to 833 (KKKK…KRKQ). Basic residues predominate over residues 783 to 810 (KQKKVKSKQKKVKSKQKKVKSKQKKVKS). Over residues 811–824 (KQNEIKSKQNEIKS) the composition is skewed to basic and acidic residues.

Belongs to the TIC214 family. In terms of assembly, part of the Tic complex.

It is found in the plastid. Its subcellular location is the chloroplast inner membrane. Its function is as follows. Involved in protein precursor import into chloroplasts. May be part of an intermediate translocation complex acting as a protein-conducting channel at the inner envelope. This is Protein TIC 214 from Oenothera berteroana (Bertero's evening primrose).